Consider the following 573-residue polypeptide: Proline--tRNA ligase (573 aa).

This sequence belongs to the class-II aminoacyl-tRNA synthetase family. ProS type 1 subfamily. As to quaternary structure, homodimer.

The protein resides in the cytoplasm. The catalysed reaction is tRNA(Pro) + L-proline + ATP = L-prolyl-tRNA(Pro) + AMP + diphosphate. In terms of biological role, catalyzes the attachment of proline to tRNA(Pro) in a two-step reaction: proline is first activated by ATP to form Pro-AMP and then transferred to the acceptor end of tRNA(Pro). As ProRS can inadvertently accommodate and process non-cognate amino acids such as alanine and cysteine, to avoid such errors it has two additional distinct editing activities against alanine. One activity is designated as 'pretransfer' editing and involves the tRNA(Pro)-independent hydrolysis of activated Ala-AMP. The other activity is designated 'posttransfer' editing and involves deacylation of mischarged Ala-tRNA(Pro). The misacylated Cys-tRNA(Pro) is not edited by ProRS. This is Proline--tRNA ligase from Elusimicrobium minutum (strain Pei191).